Consider the following 176-residue polypeptide: RNA pyrophosphohydrolase (176 aa).

The Nudix hydrolase domain maps to Gly-6–Lys-149. The Nudix box signature appears at Gly-38–Gly-59.

This sequence belongs to the Nudix hydrolase family. RppH subfamily. The cofactor is a divalent metal cation.

In terms of biological role, accelerates the degradation of transcripts by removing pyrophosphate from the 5'-end of triphosphorylated RNA, leading to a more labile monophosphorylated state that can stimulate subsequent ribonuclease cleavage. The polypeptide is RNA pyrophosphohydrolase (Salmonella arizonae (strain ATCC BAA-731 / CDC346-86 / RSK2980)).